The chain runs to 432 residues: Ubiquitin-like modifier-activating enzyme 5 (432 aa).

Residues 25-47 (ETKKNQTPSVLKGPTVSQERPSA) are disordered. A compositionally biased stretch (polar residues) spans 29–44 (NQTPSVLKGPTVSQER). Residues glycine 96, aspartate 117, lysine 140, asparagine 163, and asparagine 196 each coordinate ATP. Zn(2+) contacts are provided by cysteine 238 and cysteine 241. The active-site Glycyl thioester intermediate is cysteine 262. Cysteine 315 and cysteine 320 together coordinate Zn(2+). The disordered stretch occupies residues 363–406 (DTTEAPSSSAATEVAPGLKFAYEPTQTPKKNSSDNLKLSPSQAV). Over residues 386–406 (PTQTPKKNSSDNLKLSPSQAV) the composition is skewed to polar residues.

This sequence belongs to the ubiquitin-activating E1 family. UBA5 subfamily. In terms of assembly, interacts with ufc-1.

In terms of biological role, E1-like enzyme which activates ufm-1. Required for interaction between ufm-1 and ufc-1. The chain is Ubiquitin-like modifier-activating enzyme 5 from Caenorhabditis briggsae.